The primary structure comprises 620 residues: Glutathione-regulated potassium-efflux system protein KefC (620 aa).

The Periplasmic portion of the chain corresponds to 1–3 (MDS). Residues 4–24 (HTLVQALIYLGSAALIVPIAV) traverse the membrane as a helical segment. Arg25 is a topological domain (cytoplasmic). Residues 26–46 (LGLGSVLGYLIAGCIIGPWGL) form a helical membrane-spanning segment. Residues 47-53 (RLVTDAE) lie on the Periplasmic side of the membrane. A helical membrane pass occupies residues 54-74 (SILHFAEIGVVLMLFIIGLEL). At 75–89 (DPQRLWKLRAAVFGG) the chain is on the cytoplasmic side. The chain crosses the membrane as a helical span at residues 90–110 (GALQMVICGGLLGLFCMLLGL). The Periplasmic portion of the chain corresponds to 111–113 (RWQ). The chain crosses the membrane as a helical span at residues 114–134 (VAELIGMTLALSSTAIAMQAM). Residues 135-148 (NERNLMVTQMGRSA) are Cytoplasmic-facing. Residues 149–169 (FAVLLFQDIAAIPLVAMIPLL) form a helical membrane-spanning segment. The Periplasmic portion of the chain corresponds to 170–177 (AASSASTT). The helical transmembrane segment at 178-198 (MGAFALSALKVAGALVLVVLL) threads the bilayer. The Cytoplasmic portion of the chain corresponds to 199-213 (GRYVTRPALRFVARS). The chain crosses the membrane as a helical span at residues 214–233 (GLREVFSAVALFLVFGFGLL). Residues 234–236 (LEE) are Periplasmic-facing. Residues 237-254 (VGLSMAMGAFLAGVLLAS) form a helical membrane-spanning segment. Residues 255–269 (SEYRHALESDIEPFK) lie on the Cytoplasmic side of the membrane. The chain crosses the membrane as a helical span at residues 270–290 (GLLLGLFFIGVGMSIDFGTLI). Over 291–293 (ENP) the chain is Periplasmic. Residues 294–314 (LRIVILLLGFLIIKIAMLWLI) form a helical membrane-spanning segment. Residues 315–326 (ARPLQVPNKQRR) are Cytoplasmic-facing. A helical membrane pass occupies residues 327 to 347 (WFAVLLGQGSEFAFVVFGAAQ). Residues 348-358 (MANVLEPEWAK) lie on the Periplasmic side of the membrane. Residues 359–379 (SLTLAVALSMAATPILLVILN) traverse the membrane as a helical segment. Residues 380–620 (RLEQSSTEEA…ADEPETKPSS (241 aa)) lie on the Cytoplasmic side of the membrane. The 120-residue stretch at 399–518 (QPRVIIAGFG…AGVEKPERET (120 aa)) folds into the RCK N-terminal domain. A disordered region spans residues 597–620 (GWQGTEEGKHTGNMADEPETKPSS).

This sequence belongs to the monovalent cation:proton antiporter 2 (CPA2) transporter (TC 2.A.37) family. KefC subfamily. As to quaternary structure, homodimer. Interacts with the regulatory subunit KefF.

It localises to the cell inner membrane. In terms of biological role, pore-forming subunit of a potassium efflux system that confers protection against electrophiles. Catalyzes K(+)/H(+) antiport. The chain is Glutathione-regulated potassium-efflux system protein KefC from Shigella flexneri.